Here is a 550-residue protein sequence, read N- to C-terminus: ATP synthase subunit alpha (550 aa).

Residue 172–179 participates in ATP binding; that stretch reads GDRKTGKT. Residues 514 to 550 form a disordered region; the sequence is EDEQRVNEPPAKPLAGEENRETVTRFRDGTTDRPAES. A compositionally biased stretch (basic and acidic residues) spans 528-550; the sequence is AGEENRETVTRFRDGTTDRPAES.

Belongs to the ATPase alpha/beta chains family. In terms of assembly, F-type ATPases have 2 components, CF(1) - the catalytic core - and CF(0) - the membrane proton channel. CF(1) has five subunits: alpha(3), beta(3), gamma(1), delta(1), epsilon(1). CF(0) has three main subunits: a(1), b(2) and c(9-12). The alpha and beta chains form an alternating ring which encloses part of the gamma chain. CF(1) is attached to CF(0) by a central stalk formed by the gamma and epsilon chains, while a peripheral stalk is formed by the delta and b chains.

It localises to the cell membrane. The enzyme catalyses ATP + H2O + 4 H(+)(in) = ADP + phosphate + 5 H(+)(out). Functionally, produces ATP from ADP in the presence of a proton gradient across the membrane. The alpha chain is a regulatory subunit. The chain is ATP synthase subunit alpha from Salinispora arenicola (strain CNS-205).